A 228-amino-acid polypeptide reads, in one-letter code: Cytochrome c oxidase subunit 2 (228 aa).

Over 1–26 (MRTWSNFNLQNSASPLMEQIIFFHDH) the chain is Mitochondrial intermembrane. The helical transmembrane segment at 27–48 (TLIILIMITILVGYIMINLFFN) threads the bilayer. Residues 49–62 (KFINRFFLVGQMIE) are Mitochondrial matrix-facing. Residues 63–82 (LIWTVLPAITLIFIALPSLR) form a helical membrane-spanning segment. Topologically, residues 83–228 (LLYLLDELNN…FINWINNYSY (146 aa)) are mitochondrial intermembrane. Cu cation is bound by residues histidine 161, cysteine 196, glutamate 198, cysteine 200, histidine 204, and methionine 207. Position 198 (glutamate 198) interacts with Mg(2+).

It belongs to the cytochrome c oxidase subunit 2 family. Component of the cytochrome c oxidase (complex IV, CIV), a multisubunit enzyme composed of a catalytic core of 3 subunits and several supernumerary subunits. The complex exists as a monomer or a dimer and forms supercomplexes (SCs) in the inner mitochondrial membrane with ubiquinol-cytochrome c oxidoreductase (cytochrome b-c1 complex, complex III, CIII). It depends on Cu cation as a cofactor.

Its subcellular location is the mitochondrion inner membrane. The enzyme catalyses 4 Fe(II)-[cytochrome c] + O2 + 8 H(+)(in) = 4 Fe(III)-[cytochrome c] + 2 H2O + 4 H(+)(out). Its function is as follows. Component of the cytochrome c oxidase, the last enzyme in the mitochondrial electron transport chain which drives oxidative phosphorylation. The respiratory chain contains 3 multisubunit complexes succinate dehydrogenase (complex II, CII), ubiquinol-cytochrome c oxidoreductase (cytochrome b-c1 complex, complex III, CIII) and cytochrome c oxidase (complex IV, CIV), that cooperate to transfer electrons derived from NADH and succinate to molecular oxygen, creating an electrochemical gradient over the inner membrane that drives transmembrane transport and the ATP synthase. Cytochrome c oxidase is the component of the respiratory chain that catalyzes the reduction of oxygen to water. Electrons originating from reduced cytochrome c in the intermembrane space (IMS) are transferred via the dinuclear copper A center (CU(A)) of subunit 2 and heme A of subunit 1 to the active site in subunit 1, a binuclear center (BNC) formed by heme A3 and copper B (CU(B)). The BNC reduces molecular oxygen to 2 water molecules using 4 electrons from cytochrome c in the IMS and 4 protons from the mitochondrial matrix. The chain is Cytochrome c oxidase subunit 2 (COII) from Galleria mellonella (Greater wax moth).